Reading from the N-terminus, the 1178-residue chain is DNA-directed RNA polymerase subunit beta' (1178 aa).

4 residues coordinate Zn(2+): Cys60, Cys62, Cys75, and Cys78. Positions 450, 452, and 454 each coordinate Mg(2+). Positions 795, 869, 876, and 879 each coordinate Zn(2+).

The protein belongs to the RNA polymerase beta' chain family. As to quaternary structure, the RNAP catalytic core consists of 2 alpha, 1 beta, 1 beta' and 1 omega subunit. When a sigma factor is associated with the core the holoenzyme is formed, which can initiate transcription. Mg(2+) is required as a cofactor. It depends on Zn(2+) as a cofactor.

It catalyses the reaction RNA(n) + a ribonucleoside 5'-triphosphate = RNA(n+1) + diphosphate. In terms of biological role, DNA-dependent RNA polymerase catalyzes the transcription of DNA into RNA using the four ribonucleoside triphosphates as substrates. This Clostridium botulinum (strain Langeland / NCTC 10281 / Type F) protein is DNA-directed RNA polymerase subunit beta'.